A 66-amino-acid chain; its full sequence is Large ribosomal subunit protein bL31 (66 aa).

Zn(2+) contacts are provided by Cys16, Cys18, Cys36, and Cys39.

It belongs to the bacterial ribosomal protein bL31 family. Type A subfamily. In terms of assembly, part of the 50S ribosomal subunit. It depends on Zn(2+) as a cofactor.

Binds the 23S rRNA. This chain is Large ribosomal subunit protein bL31, found in Leptospira biflexa serovar Patoc (strain Patoc 1 / Ames).